We begin with the raw amino-acid sequence, 137 residues long: MAKKVQKKLPRRKEEFTYHGYKIDELRAMSLEDLLPVMPSRARRKVLRGWTIGEEKLLSDIRSNGSRIRTHQRDMIILPEMIGREIEIYNGKEFIRVELQPESVFHYLGEFALTRRRVTHGSAGIGATRSSKFVPLK.

Belongs to the universal ribosomal protein uS19 family.

Protein S19 forms a complex with S13 that binds strongly to the 16S ribosomal RNA. The protein is Small ribosomal subunit protein uS19 of Methanospirillum hungatei JF-1 (strain ATCC 27890 / DSM 864 / NBRC 100397 / JF-1).